We begin with the raw amino-acid sequence, 103 residues long: Large ribosomal subunit protein uL24 (103 aa).

It belongs to the universal ribosomal protein uL24 family. As to quaternary structure, part of the 50S ribosomal subunit.

In terms of biological role, one of two assembly initiator proteins, it binds directly to the 5'-end of the 23S rRNA, where it nucleates assembly of the 50S subunit. One of the proteins that surrounds the polypeptide exit tunnel on the outside of the subunit. This chain is Large ribosomal subunit protein uL24, found in Dehalococcoides mccartyi (strain ATCC BAA-2266 / KCTC 15142 / 195) (Dehalococcoides ethenogenes (strain 195)).